Here is a 306-residue protein sequence, read N- to C-terminus: uncharacterized protein (306 aa).

Aspartate 204 (proton acceptor) is an active-site residue.

It belongs to the aminoglycoside phosphotransferase family.

This is an uncharacterized protein from Bacillus subtilis (strain 168).